The chain runs to 270 residues: Indole-3-glycerol phosphate synthase (270 aa).

The protein belongs to the TrpC family.

The catalysed reaction is 1-(2-carboxyphenylamino)-1-deoxy-D-ribulose 5-phosphate + H(+) = (1S,2R)-1-C-(indol-3-yl)glycerol 3-phosphate + CO2 + H2O. It participates in amino-acid biosynthesis; L-tryptophan biosynthesis; L-tryptophan from chorismate: step 4/5. This chain is Indole-3-glycerol phosphate synthase, found in Beutenbergia cavernae (strain ATCC BAA-8 / DSM 12333 / CCUG 43141 / JCM 11478 / NBRC 16432 / NCIMB 13614 / HKI 0122).